The primary structure comprises 610 residues: uncharacterized protein (610 aa).

The span at 1–28 (MDSPSTSESPLKKNTIQDFGESNMTESP) shows a compositional bias: polar residues. Residues 1 to 36 (MDSPSTSESPLKKNTIQDFGESNMTESPQSKEEIDE) are disordered. The RING-type zinc-finger motif lies at 41–82 (CSVCKNEIIDTTSLSDCCHEFCYDCIVGWLTKGSGPFCPMCK). Disordered regions lie at residues 390 to 411 (YRGQ…FRPA) and 431 to 515 (TSSA…SADR). Positions 432–447 (SSAGAGSARSRGSDSV) are enriched in low complexity. Acidic residues-rich tracts occupy residues 448–470 (VEID…EDSD) and 478–487 (SEEDSDEEIQ).

This is an uncharacterized protein from Caenorhabditis elegans.